The sequence spans 343 residues: Selenide, water dikinase (343 aa).

Selenocysteine 13 is an active-site residue. Selenocysteine 13 is a non-standard amino acid (selenocysteine). ATP is bound by residues lysine 16 and 44 to 46 (TAD). A Mg(2+)-binding site is contributed by aspartate 47. Residues aspartate 64, aspartate 87, and 135–137 (GHT) each bind ATP. Aspartate 87 serves as a coordination point for Mg(2+). Mg(2+) is bound at residue aspartate 223.

The protein belongs to the selenophosphate synthase 1 family. Class I subfamily. In terms of assembly, homodimer. Mg(2+) is required as a cofactor.

The catalysed reaction is hydrogenselenide + ATP + H2O = selenophosphate + AMP + phosphate + 2 H(+). Its function is as follows. Synthesizes selenophosphate from selenide and ATP. This Geobacter metallireducens (strain ATCC 53774 / DSM 7210 / GS-15) protein is Selenide, water dikinase.